Reading from the N-terminus, the 286-residue chain is tRNA (guanine-N(1)-)-methyltransferase (286 aa).

S-adenosyl-L-methionine contacts are provided by residues G116 and I140 to L145. The segment at D232–H286 is disordered.

Belongs to the RNA methyltransferase TrmD family. As to quaternary structure, homodimer.

It is found in the cytoplasm. The catalysed reaction is guanosine(37) in tRNA + S-adenosyl-L-methionine = N(1)-methylguanosine(37) in tRNA + S-adenosyl-L-homocysteine + H(+). Specifically methylates guanosine-37 in various tRNAs. In Acidothermus cellulolyticus (strain ATCC 43068 / DSM 8971 / 11B), this protein is tRNA (guanine-N(1)-)-methyltransferase.